A 99-amino-acid polypeptide reads, in one-letter code: MAEVKPHHYDVIRRPLITEKSTLVAEQNKIIFEVAPDADKKAIKEAVEVLFKVSVTKVNTLTQKGKTKRFRGFEGRRSDVKKAIVTLAEGQSVDISTGL.

This sequence belongs to the universal ribosomal protein uL23 family. As to quaternary structure, part of the 50S ribosomal subunit. Contacts protein L29, and trigger factor when it is bound to the ribosome.

One of the early assembly proteins it binds 23S rRNA. One of the proteins that surrounds the polypeptide exit tunnel on the outside of the ribosome. Forms the main docking site for trigger factor binding to the ribosome. The protein is Large ribosomal subunit protein uL23 of Hyphomonas neptunium (strain ATCC 15444).